The sequence spans 340 residues: Putative phosphatidylcholine:ceramide cholinephosphotransferase 3 (340 aa).

A disordered region spans residues 1 to 25 (MGSVSKTVISARGASPDDEQNGTKN). Transmembrane regions (helical) follow at residues 36–56 (CIFL…VLAY), 81–101 (SSLG…LLVI), 178–198 (LLFS…AYYL), and 202–222 (IKPL…CMTI). The active site involves H183. At 223 to 340 (SRTHYTIDVV…SSSSTYPLPC (118 aa)) the chain is on the cytoplasmic side. Active-site residues include H226 and D230. The disordered stretch occupies residues 294-313 (STPRGQERGGASAESSDSSV).

This sequence belongs to the sphingomyelin synthase family.

It is found in the membrane. It catalyses the reaction an N-acyl-sphingoid base + a 1,2-diacyl-sn-glycero-3-phosphocholine = an N-(acyl)-sphingosylphosphocholine + a 1,2-diacyl-sn-glycerol. The catalysed reaction is an N-acylsphing-4-enine + a 1,2-diacyl-sn-glycero-3-phosphocholine = a sphingomyelin + a 1,2-diacyl-sn-glycerol. It carries out the reaction an N-acyl-15-methylhexadecasphing-4-enine + a 1,2-diacyl-sn-glycero-3-phosphocholine = an N-acyl-15-methylhexadecasphing-4-enine-1-phosphocholine + a 1,2-diacyl-sn-glycerol. Its pathway is lipid metabolism; sphingolipid metabolism. In terms of biological role, bidirectional lipid cholinephosphotransferase capable of converting phosphatidylcholine (PC) and ceramide to sphingomyelin (SM) and diacylglycerol (DAG) and vice versa. Direction is dependent on the relative concentrations of DAG and ceramide as phosphocholine acceptors. Directly and specifically recognizes the choline head group on the substrate. Also requires two fatty chains on the choline-P donor molecule in order to be recognized efficiently as a substrate. Does not function strictly as a SM synthase. C.elegans contains specific sphingoid bases, which are unique or different in structure compared to the sphingoid bases found in other animals. Two examples of these distinctive compounds are: 15-methylhexadecasphinganine and 15-methylhexadecasphing-4-enine. This Caenorhabditis elegans protein is Putative phosphatidylcholine:ceramide cholinephosphotransferase 3 (sms-3).